Here is a 505-residue protein sequence, read N- to C-terminus: Maturase K (505 aa).

It belongs to the intron maturase 2 family. MatK subfamily.

It localises to the plastid. It is found in the chloroplast. Its function is as follows. Usually encoded in the trnK tRNA gene intron. Probably assists in splicing its own and other chloroplast group II introns. This chain is Maturase K, found in Beta vulgaris (Sugar beet).